We begin with the raw amino-acid sequence, 292 residues long: Complex I assembly factor TIMMDC1, mitochondrial (292 aa).

Transmembrane regions (helical) follow at residues 146–168 (WSWRVAAFVTLFNTVNTGLTVYR) and 195–215 (GLLSGTIIGVILGFPAGVLIL).

This sequence belongs to the Tim17/Tim22/Tim23 family. Associates with the intermediate 315 kDa subcomplex of incompletely assembled complex I.

Its subcellular location is the mitochondrion membrane. In terms of biological role, chaperone protein involved in the assembly of the mitochondrial NADH:ubiquinone oxidoreductase complex (complex I). Participates in constructing the membrane arm of complex I. This is Complex I assembly factor TIMMDC1, mitochondrial (timmdc1) from Danio rerio (Zebrafish).